Reading from the N-terminus, the 427-residue chain is Enolase (427 aa).

A (2R)-2-phosphoglycerate-binding site is contributed by Gln-162. Catalysis depends on Glu-204, which acts as the Proton donor. 3 residues coordinate Mg(2+): Asp-241, Glu-284, and Asp-311. 4 residues coordinate (2R)-2-phosphoglycerate: Lys-336, Arg-365, Ser-366, and Lys-387. Catalysis depends on Lys-336, which acts as the Proton acceptor.

It belongs to the enolase family. The cofactor is Mg(2+).

The protein localises to the cytoplasm. It is found in the secreted. It localises to the cell surface. It carries out the reaction (2R)-2-phosphoglycerate = phosphoenolpyruvate + H2O. It functions in the pathway carbohydrate degradation; glycolysis; pyruvate from D-glyceraldehyde 3-phosphate: step 4/5. In terms of biological role, catalyzes the reversible conversion of 2-phosphoglycerate (2-PG) into phosphoenolpyruvate (PEP). It is essential for the degradation of carbohydrates via glycolysis. The chain is Enolase from Corynebacterium kroppenstedtii (strain DSM 44385 / JCM 11950 / CIP 105744 / CCUG 35717).